A 494-amino-acid chain; its full sequence is Cobyric acid synthase (494 aa).

In terms of domain architecture, GATase cobBQ-type spans 252–444 (DLNIAVIRLP…LHGLFDNGPW (193 aa)). Catalysis depends on Cys-333, which acts as the Nucleophile. His-436 is a catalytic residue.

It belongs to the CobB/CobQ family. CobQ subfamily.

It functions in the pathway cofactor biosynthesis; adenosylcobalamin biosynthesis. Catalyzes amidations at positions B, D, E, and G on adenosylcobyrinic A,C-diamide. NH(2) groups are provided by glutamine, and one molecule of ATP is hydrogenolyzed for each amidation. The polypeptide is Cobyric acid synthase (Nostoc punctiforme (strain ATCC 29133 / PCC 73102)).